The chain runs to 162 residues: UPF0262 protein AZC_3148 (162 aa).

Belongs to the UPF0262 family.

The chain is UPF0262 protein AZC_3148 from Azorhizobium caulinodans (strain ATCC 43989 / DSM 5975 / JCM 20966 / LMG 6465 / NBRC 14845 / NCIMB 13405 / ORS 571).